Here is a 374-residue protein sequence, read N- to C-terminus: Chaperone protein DnaJ (374 aa).

The J domain occupies 5-70 (DYYEVLGVNL…RKRASYDQFG (66 aa)). A CR-type zinc finger spans residues 133 to 210 (GLSRTIKVPT…CHGQGRQQQT (78 aa)). Zn(2+) is bound by residues cysteine 146, cysteine 149, cysteine 162, cysteine 165, cysteine 184, cysteine 187, cysteine 198, and cysteine 201. 4 CXXCXGXG motif repeats span residues 146–153 (CKTCNGSG), 162–169 (CPRCNGSG), 184–191 (CSVCRGRG), and 198–205 (CTDCHGQG).

This sequence belongs to the DnaJ family. As to quaternary structure, homodimer. The cofactor is Zn(2+).

Its subcellular location is the cytoplasm. In terms of biological role, participates actively in the response to hyperosmotic and heat shock by preventing the aggregation of stress-denatured proteins and by disaggregating proteins, also in an autonomous, DnaK-independent fashion. Unfolded proteins bind initially to DnaJ; upon interaction with the DnaJ-bound protein, DnaK hydrolyzes its bound ATP, resulting in the formation of a stable complex. GrpE releases ADP from DnaK; ATP binding to DnaK triggers the release of the substrate protein, thus completing the reaction cycle. Several rounds of ATP-dependent interactions between DnaJ, DnaK and GrpE are required for fully efficient folding. Also involved, together with DnaK and GrpE, in the DNA replication of plasmids through activation of initiation proteins. The chain is Chaperone protein DnaJ from Coxiella burnetii (strain RSA 493 / Nine Mile phase I).